A 154-amino-acid chain; its full sequence is Transcriptional repressor NrdR (154 aa).

Residues 3-34 (CPYCRHPDSRVVDSREADDGQLIRRRRSCPEC) fold into a zinc finger. One can recognise an ATP-cone domain in the interval 46 to 136 (LAVVKRSGVT…VYRSFESLAD (91 aa)).

Belongs to the NrdR family. Zn(2+) serves as cofactor.

Functionally, negatively regulates transcription of bacterial ribonucleotide reductase nrd genes and operons by binding to NrdR-boxes. The polypeptide is Transcriptional repressor NrdR (Salinispora arenicola (strain CNS-205)).